The following is a 336-amino-acid chain: Uridine nucleosidase 1 (336 aa).

Active-site residues include D29 and H260.

The protein belongs to the IUNH family. As to quaternary structure, homodimer. Component of the NSH heterocomplex made of URH1/NSH1 and URH2/NSH2 which exhibits strong xanthosine nucleosidase activity. Interacts with URH2. As to expression, expressed ubiquitously in leaves, flowers, stems, pollen cells, root tip meristem and root vasculature.

It localises to the cytoplasm. It carries out the reaction uridine + H2O = D-ribose + uracil. It catalyses the reaction xanthosine + H2O = D-ribose + xanthine. The enzyme catalyses inosine + H2O = hypoxanthine + D-ribose. The catalysed reaction is adenosine + H2O = D-ribose + adenine. Involved in purine and pyrimidine breakdown rather than in pyrimidine salvage, especially in response to dark stress. Together with URH2, required for efficient inosine and xanthosine hydrolytic activities. Unable to use cytidine as a substrate. Can use uridine, inosine, adenosine as well as the cytokinin derivative isopentenyladenine-riboside as substrates. Also hydrolyzes xanthosine with high efficiency. In Arabidopsis thaliana (Mouse-ear cress), this protein is Uridine nucleosidase 1.